Here is a 476-residue protein sequence, read N- to C-terminus: Ubiquitin-conjugating enzyme E2 variant 3 (476 aa).

One can recognise a UEV domain in the interval 2–145; the sequence is EFSAETLRQQ…EEELPLYSLS (144 aa). Residue 185–213 coordinates NAD(+); that stretch reads GDMALACLLAVSAKGTAGKLLLLDPTDGE.

It in the N-terminal section; belongs to the ubiquitin-conjugating enzyme family. UEV subfamily. This sequence in the C-terminal section; belongs to the LDH/MDH superfamily. Homodimer.

Its function is as follows. Possible negative regulator of polyubiquitination. This Xenopus tropicalis (Western clawed frog) protein is Ubiquitin-conjugating enzyme E2 variant 3 (uevld).